The sequence spans 48 residues: ATP synthase protein 8 (48 aa).

The residue at position 1 (methionine 1) is an N-formylmethionine. Over 1-12 (MPQLIPFFFLNQ) the chain is Mitochondrial intermembrane. A helical transmembrane segment spans residues 13 to 33 (LFYGYLALFALLVLVSWVILP). Residues 34–48 (YLLQLQIVRLLITKL) are Mitochondrial matrix-facing.

F-type ATP synthases have 2 components, the catalytic core F(1) and the membrane-embedded component F(0), linked together by a central stalk and a peripheral stalk. The central stalk, also called rotor shaft, is often seen as part of F(1). The peripheral stalk is seen as part of F(0). F(0) contains the membrane channel next to the rotor. F-type ATP synthases form dimers but each monomer functions independently in ATP generation. The dimer consists of 18 different polypeptides: ATP1 (subunit alpha, part of F(1), 3 molecules per monomer), ATP2 (subunit beta, part of F(1), 3 molecules per monomer), ATP3 (subunit gamma, part of the central stalk), ATP4 (subunit b, part of the peripheral stalk), ATP5/OSCP (subunit 5/OSCP, part of the peripheral stalk), ATP6 (subunit a, part of the peripheral stalk), ATP7 (subunit d, part of the peripheral stalk), ATP8 (subunit 8, part of the peripheral stalk), OLI1 (subunit c, part of the rotor, 10 molecules per monomer), ATP14 (subunit h, part of the peripheral stalk), ATP15 (subunit epsilon, part of the central stalk), ATP16 (subunit delta, part of the central stalk), ATP17 (subunit f, part of the peripheral stalk), ATP18 (subunit i/j, part of the peripheral stalk). Dimer-specific subunits are ATP19 (subunit k, at interface between monomers), ATP20 (subunit g, at interface between monomers), TIM11 (subunit e, at interface between monomers). Also contains subunit L.

It is found in the mitochondrion inner membrane. In terms of biological role, mitochondrial membrane ATP synthase (F(1)F(0) ATP synthase or Complex V) produces ATP from ADP in the presence of a proton gradient across the membrane which is generated by electron transport complexes of the respiratory chain. F-type ATP synthases consist of two structural domains, F(1) - containing the extramembraneous catalytic core, and F(0) - containing the membrane proton channel, linked together by a central stalk and a peripheral stalk. During catalysis, ATP synthesis in the catalytic domain of F(1) is coupled via a rotary mechanism of the central stalk subunits to proton translocation. Part of the complex F(0) domain. Minor subunit located with subunit a/ATP6 in the membrane. The polypeptide is ATP synthase protein 8 (Pichia angusta (Yeast)).